The primary structure comprises 255 residues: tRNA (guanine-N(1)-)-methyltransferase (255 aa).

Residues glycine 113 and 133–138 (IGDYVL) each bind S-adenosyl-L-methionine.

Belongs to the RNA methyltransferase TrmD family. In terms of assembly, homodimer.

Its subcellular location is the cytoplasm. The enzyme catalyses guanosine(37) in tRNA + S-adenosyl-L-methionine = N(1)-methylguanosine(37) in tRNA + S-adenosyl-L-homocysteine + H(+). Functionally, specifically methylates guanosine-37 in various tRNAs. The sequence is that of tRNA (guanine-N(1)-)-methyltransferase from Klebsiella pneumoniae subsp. pneumoniae (strain ATCC 700721 / MGH 78578).